A 145-amino-acid polypeptide reads, in one-letter code: Ribonuclease P protein component (145 aa).

Positions 120 to 130 (LPAAPGTMPPA) are enriched in low complexity. Residues 120-145 (LPAAPGTMPPARTMHPSSLSPTEPDL) form a disordered region. Residues 134–145 (HPSSLSPTEPDL) show a composition bias toward polar residues.

The protein belongs to the RnpA family. Consists of a catalytic RNA component (M1 or rnpB) and a protein subunit.

It catalyses the reaction Endonucleolytic cleavage of RNA, removing 5'-extranucleotides from tRNA precursor.. In terms of biological role, RNaseP catalyzes the removal of the 5'-leader sequence from pre-tRNA to produce the mature 5'-terminus. It can also cleave other RNA substrates such as 4.5S RNA. The protein component plays an auxiliary but essential role in vivo by binding to the 5'-leader sequence and broadening the substrate specificity of the ribozyme. The polypeptide is Ribonuclease P protein component (Xanthomonas oryzae pv. oryzae (strain MAFF 311018)).